A 459-amino-acid chain; its full sequence is ATP synthase subunit beta (459 aa).

149–156 (GGAGVGKT) lines the ATP pocket.

This sequence belongs to the ATPase alpha/beta chains family. In terms of assembly, F-type ATPases have 2 components, CF(1) - the catalytic core - and CF(0) - the membrane proton channel. CF(1) has five subunits: alpha(3), beta(3), gamma(1), delta(1), epsilon(1). CF(0) has three main subunits: a(1), b(2) and c(9-12). The alpha and beta chains form an alternating ring which encloses part of the gamma chain. CF(1) is attached to CF(0) by a central stalk formed by the gamma and epsilon chains, while a peripheral stalk is formed by the delta and b chains.

The protein localises to the cell inner membrane. It carries out the reaction ATP + H2O + 4 H(+)(in) = ADP + phosphate + 5 H(+)(out). In terms of biological role, produces ATP from ADP in the presence of a proton gradient across the membrane. The catalytic sites are hosted primarily by the beta subunits. This Pseudomonas syringae pv. syringae (strain B728a) protein is ATP synthase subunit beta.